We begin with the raw amino-acid sequence, 103 residues long: Large ribosomal subunit protein bL21 (103 aa).

It belongs to the bacterial ribosomal protein bL21 family. In terms of assembly, part of the 50S ribosomal subunit. Contacts protein L20.

In terms of biological role, this protein binds to 23S rRNA in the presence of protein L20. The polypeptide is Large ribosomal subunit protein bL21 (Acinetobacter baumannii (strain AB307-0294)).